The sequence spans 34 residues: MPNLQTVAQLISLFLILTSGPAIIVLIALRRGNL.

A helical membrane pass occupies residues 7–27 (VAQLISLFLILTSGPAIIVLI).

This sequence belongs to the Psb30/Ycf12 family. In terms of assembly, PSII is composed of 1 copy each of membrane proteins PsbA, PsbB, PsbC, PsbD, PsbE, PsbF, PsbH, PsbI, PsbJ, PsbK, PsbL, PsbM, PsbT, PsbX, PsbY, PsbZ, Psb30/Ycf12, peripheral proteins of the oxygen-evolving complex and a large number of cofactors. It forms dimeric complexes.

It is found in the plastid. It localises to the chloroplast thylakoid membrane. Its function is as follows. A core subunit of photosystem II (PSII), probably helps stabilize the reaction center. In Rhodomonas salina (Cryptomonas salina), this protein is Photosystem II reaction center protein Psb30.